A 143-amino-acid polypeptide reads, in one-letter code: Large ribosomal subunit protein uL11 (143 aa).

Belongs to the universal ribosomal protein uL11 family. As to quaternary structure, part of the ribosomal stalk of the 50S ribosomal subunit. Interacts with L10 and the large rRNA to form the base of the stalk. L10 forms an elongated spine to which L12 dimers bind in a sequential fashion forming a multimeric L10(L12)X complex. Post-translationally, one or more lysine residues are methylated.

Forms part of the ribosomal stalk which helps the ribosome interact with GTP-bound translation factors. In Zymomonas mobilis subsp. mobilis (strain ATCC 31821 / ZM4 / CP4), this protein is Large ribosomal subunit protein uL11.